The following is a 219-amino-acid chain: Large ribosomal subunit protein uL1 (219 aa).

This sequence belongs to the universal ribosomal protein uL1 family. In terms of assembly, part of the 50S ribosomal subunit.

In terms of biological role, probably involved in E site tRNA release. Binds directly to 23S rRNA. Protein L1 is also a translational repressor protein, it controls the translation of its operon by binding to its mRNA. The polypeptide is Large ribosomal subunit protein uL1 (Methanocaldococcus jannaschii (strain ATCC 43067 / DSM 2661 / JAL-1 / JCM 10045 / NBRC 100440) (Methanococcus jannaschii)).